The chain runs to 220 residues: MALIFRTAMQSVGLLLSLLGWILSIITTYLPHWKNLNLDLNEMENWTMGLWQTCVIQEEVGMQCKDFDSFLALPAELRVSRILMFLSNGLGFLGLLVSGFGLDCLRIGESQRDLKRRLLILGGILSWASGITALVPVSWVAHKTVQEFWDENVPDFVPRWEFGEALFLGWFAGLSLLLGGCLLNCAACSSHAPLALGHYAVAQMQTQCPYLEDGTADPQV.

At 1–10 the chain is on the cytoplasmic side; sequence MALIFRTAMQ. A helical membrane pass occupies residues 11 to 31; it reads SVGLLLSLLGWILSIITTYLP. Over 32–81 the chain is Extracellular; it reads HWKNLNLDLNEMENWTMGLWQTCVIQEEVGMQCKDFDSFLALPAELRVSR. A helical membrane pass occupies residues 82–102; it reads ILMFLSNGLGFLGLLVSGFGL. Residues 103–117 are Cytoplasmic-facing; that stretch reads DCLRIGESQRDLKRR. Residues 118-138 traverse the membrane as a helical segment; it reads LLILGGILSWASGITALVPVS. Topologically, residues 139–161 are extracellular; that stretch reads WVAHKTVQEFWDENVPDFVPRWE. The chain crosses the membrane as a helical span at residues 162–182; that stretch reads FGEALFLGWFAGLSLLLGGCL. The Cytoplasmic portion of the chain corresponds to 183-220; it reads LNCAACSSHAPLALGHYAVAQMQTQCPYLEDGTADPQV.

This sequence belongs to the claudin family.

It localises to the cell junction. It is found in the tight junction. The protein resides in the cell membrane. Functionally, plays a major role in tight junction-specific obliteration of the intercellular space, through calcium-independent cell-adhesion activity. The protein is Claudin-24 of Homo sapiens (Human).